Here is a 491-residue protein sequence, read N- to C-terminus: Putative pentatricopeptide repeat-containing protein At1g02420 (491 aa).

PPR repeat units follow at residues 179 to 209, 210 to 244, 245 to 279, 280 to 314, 315 to 349, 350 to 384, 385 to 419, and 420 to 454; these read DTACFNALLRTLCQEKSMTDARNVYHSLKHQ, FQPDLQTFNILLSGWKSSEEAEAFFEEMKGKGLKP, DVVTYNSLIDVYCKDREIEKAYKLIDKMREEEETP, DVITYTTVIGGLGLIGQPDKAREVLKEMKEYGCYP, DVAAYNAAIRNFCIARRLGDADKLVDEMVKKGLSP, NATTYNLFFRVLSLANDLGRSWELYVRMLGNECLP, NTQSCMFLIKMFKRHEKVDMAMRLWEDMVVKGFGS, and YSLVSDVLLDLLCDLAKVEEAEKCLLEMVEKGHRP.

This sequence belongs to the PPR family. P subfamily.

This chain is Putative pentatricopeptide repeat-containing protein At1g02420, found in Arabidopsis thaliana (Mouse-ear cress).